The chain runs to 132 residues: Gamma-crystallin-5 (132 aa).

Residues 1–40 (ILYEQPSYRGHQYYLWKGEYPDFQRWMGFNDSIRSCRMSP) enclose the Beta/gamma crystallin 'Greek key' 2 domain. Positions 41–45 (YHQGQ) are connecting peptide. Beta/gamma crystallin 'Greek key' domains lie at 46 to 86 (YKMR…NVFD) and 87 to 129 (GNWM…RRVH).

The protein belongs to the beta/gamma-crystallin family. As to quaternary structure, monomer.

In terms of biological role, crystallins are the dominant structural components of the vertebrate eye lens. This is Gamma-crystallin-5 (cryg5) from Xenopus laevis (African clawed frog).